Reading from the N-terminus, the 328-residue chain is Phosphatidylglycerol--prolipoprotein diacylglyceryl transferase (328 aa).

3 helical membrane passes run 15–35 (VIQG…ILIS), 57–77 (IFMF…STLV), and 106–126 (GMAI…TINT). R156 lines the a 1,2-diacyl-sn-glycero-3-phospho-(1'-sn-glycerol) pocket. A run of 2 helical transmembrane segments spans residues 242-262 (GFIF…IEYL) and 289-309 (ISMG…WIIV).

The protein belongs to the Lgt family.

It localises to the cell inner membrane. The catalysed reaction is L-cysteinyl-[prolipoprotein] + a 1,2-diacyl-sn-glycero-3-phospho-(1'-sn-glycerol) = an S-1,2-diacyl-sn-glyceryl-L-cysteinyl-[prolipoprotein] + sn-glycerol 1-phosphate + H(+). The protein operates within protein modification; lipoprotein biosynthesis (diacylglyceryl transfer). Functionally, catalyzes the transfer of the diacylglyceryl group from phosphatidylglycerol to the sulfhydryl group of the N-terminal cysteine of a prolipoprotein, the first step in the formation of mature lipoproteins. The protein is Phosphatidylglycerol--prolipoprotein diacylglyceryl transferase of Borreliella burgdorferi (strain ZS7) (Borrelia burgdorferi).